The primary structure comprises 575 residues: Cytokinin dehydrogenase 1 (575 aa).

Residues 1–31 (MGLTSSLRFHRQNNKTFLGIFMILVLSCIPG) form the signal peptide. N-linked (GlcNAc...) asparagine glycosylation is found at asparagine 14, asparagine 38, and asparagine 115. The region spanning 84 to 262 (YQLPPLAILH…TRARISLEPA (179 aa)) is the FAD-binding PCMH-type domain. Alanine 120, glycine 122, and glycine 124 together coordinate FAD. Histidine 125 carries the post-translational modification Pros-8alpha-FAD histidine. Positions 126, 130, 186, 191, 197, 201, and 252 each coordinate FAD. Asparagine 303, asparagine 318, asparagine 437, and asparagine 467 each carry an N-linked (GlcNAc...) asparagine glycan. FAD is bound by residues tyrosine 498 and glutamine 536.

Belongs to the oxygen-dependent FAD-linked oxidoreductase family. It depends on FAD as a cofactor. In terms of tissue distribution, expressed in shoot apexes, lateral shoot meristems, growing tissues of young flowers, and weakly at the root-hypocotyl junction.

The protein resides in the vacuole. The catalysed reaction is N(6)-dimethylallyladenine + A + H2O = 3-methyl-2-butenal + adenine + AH2. Catalyzes the oxidation of cytokinins, a family of N(6)-substituted adenine derivatives that are plant hormones, where the substituent is an isopentenyl group. Catalyzes in vitro the oxidation of various types of cytokinin nucleotides that are known as direct products of cytokinin biosynthesis. Promotes adventitious root initiation downstream of MYC2-dependent jasmonate signaling. Cytokinin degraded by CKX1 is required for cell division in the female gametophyte by modulating the expression of cell cycle genes. The protein is Cytokinin dehydrogenase 1 (CKX1) of Arabidopsis thaliana (Mouse-ear cress).